The following is a 134-amino-acid chain: Small ribosomal subunit protein bS16 (134 aa).

Residues 79 to 134 (AGIAKRPSRNNPTKGEPGKKAQERLALAKQAEEEAAAKAAEAAAAAAAPAEEAASE) form a disordered region. Residues 115 to 134 (AKAAEAAAAAAAPAEEAASE) show a composition bias toward low complexity.

This sequence belongs to the bacterial ribosomal protein bS16 family.

This chain is Small ribosomal subunit protein bS16, found in Brucella suis (strain ATCC 23445 / NCTC 10510).